The following is a 427-amino-acid chain: 3-phosphoshikimate 1-carboxyvinyltransferase (427 aa).

3-phosphoshikimate-binding residues include K22, S23, and R27. Position 22 (K22) interacts with phosphoenolpyruvate. 2 residues coordinate phosphoenolpyruvate: G96 and R124. 7 residues coordinate 3-phosphoshikimate: S169, S170, Q171, S197, D313, N336, and K340. Residue Q171 coordinates phosphoenolpyruvate. Catalysis depends on D313, which acts as the Proton acceptor. Residues R344, R386, and K411 each coordinate phosphoenolpyruvate.

This sequence belongs to the EPSP synthase family. Monomer.

The protein resides in the cytoplasm. It catalyses the reaction 3-phosphoshikimate + phosphoenolpyruvate = 5-O-(1-carboxyvinyl)-3-phosphoshikimate + phosphate. The protein operates within metabolic intermediate biosynthesis; chorismate biosynthesis; chorismate from D-erythrose 4-phosphate and phosphoenolpyruvate: step 6/7. In terms of biological role, catalyzes the transfer of the enolpyruvyl moiety of phosphoenolpyruvate (PEP) to the 5-hydroxyl of shikimate-3-phosphate (S3P) to produce enolpyruvyl shikimate-3-phosphate and inorganic phosphate. In Escherichia coli O17:K52:H18 (strain UMN026 / ExPEC), this protein is 3-phosphoshikimate 1-carboxyvinyltransferase.